The sequence spans 242 residues: N-alpha-acetyltransferase 60 (242 aa).

The Cytoplasmic segment spans residues 1-192 (MTEVVPSSAL…GGHPPWTILD (192 aa)). In terms of domain architecture, N-acetyltransferase spans 13-182 (VSLRLLCHDD…DGFTYVLYIN (170 aa)). Position 38 (tyrosine 38) interacts with substrate. Lysine 79 is subject to N6-acetyllysine; by autocatalysis. Tyrosine 97 is a catalytic residue. Leucine 99 lines the substrate pocket. 101-103 (LGV) lines the acetyl-CoA pocket. An N6-acetyllysine; by autocatalysis mark is found at lysine 105, lysine 109, and lysine 121. An acetyl-CoA-binding site is contributed by 109–114 (KHGIGS). The active site involves histidine 138. Acetyl-CoA-binding positions include asparagine 143 and 150-153 (YENR). The segment at 162–173 (PYYYSIRGVLKD) is required for homodimerization. Tyrosine 165 lines the substrate pocket. Residues 193-236 (YIQHLGSALANLSPCSIPHRIYRQAHSLLCSFLPWSSISTKGGI) constitute an intramembrane region (helical). The Cytoplasmic portion of the chain corresponds to 237-242 (EYSRTM).

This sequence belongs to the acetyltransferase family. NAA60 subfamily. In terms of assembly, monomer and homodimer; monomer in presence of substrate and homodimer in its absence. Acetylated: autoacetylation is required for optimal acetyltransferase activity.

It is found in the golgi apparatus membrane. It catalyses the reaction N-terminal L-methionyl-[transmembrane protein] + acetyl-CoA = N-terminal N(alpha)-acetyl-L-methionyl-[transmembrane protein] + CoA + H(+). It carries out the reaction L-lysyl-[protein] + acetyl-CoA = N(6)-acetyl-L-lysyl-[protein] + CoA + H(+). N-alpha-acetyltransferase that specifically mediates the acetylation of N-terminal residues of the transmembrane proteins, with a strong preference for N-termini facing the cytosol. Displays N-terminal acetyltransferase activity towards a range of N-terminal sequences including those starting with Met-Lys, Met-Val, Met-Ala and Met-Met. Required for normal chromosomal segregation during anaphase. May also show histone acetyltransferase activity; such results are however unclear in vivo and would require additional experimental evidences. The protein is N-alpha-acetyltransferase 60 (Naa60) of Mus musculus (Mouse).